Consider the following 491-residue polypeptide: Cobyric acid synthase (491 aa).

The region spanning 250-439 (ELNIIVIRLP…LHGIFDNGSW (190 aa)) is the GATase cobBQ-type domain. Catalysis depends on cysteine 331, which acts as the Nucleophile. Residue histidine 431 is part of the active site.

This sequence belongs to the CobB/CobQ family. CobQ subfamily.

It functions in the pathway cofactor biosynthesis; adenosylcobalamin biosynthesis. Catalyzes amidations at positions B, D, E, and G on adenosylcobyrinic A,C-diamide. NH(2) groups are provided by glutamine, and one molecule of ATP is hydrogenolyzed for each amidation. The sequence is that of Cobyric acid synthase from Microcystis aeruginosa (strain NIES-843 / IAM M-2473).